A 162-amino-acid polypeptide reads, in one-letter code: Ribonuclease P protein component (162 aa).

Residues 1-63 (MDEKDLATQP…PPAAGGKLLS (63 aa)) form a disordered region. A compositionally biased stretch (basic and acidic residues) spans 21-38 (GPHEDPRRQEGVEAEKAE).

This sequence belongs to the RnpA family. Consists of a catalytic RNA component (M1 or rnpB) and a protein subunit.

The catalysed reaction is Endonucleolytic cleavage of RNA, removing 5'-extranucleotides from tRNA precursor.. In terms of biological role, RNaseP catalyzes the removal of the 5'-leader sequence from pre-tRNA to produce the mature 5'-terminus. It can also cleave other RNA substrates such as 4.5S RNA. The protein component plays an auxiliary but essential role in vivo by binding to the 5'-leader sequence and broadening the substrate specificity of the ribozyme. This is Ribonuclease P protein component from Thermus scotoductus.